An 803-amino-acid polypeptide reads, in one-letter code: Ribonuclease II, chloroplastic/mitochondrial (803 aa).

A chloroplast and mitochondrion-targeting transit peptide spans 1 to 35 (MMSVRAINGCSIIRTATSAGGPPVSLFRHRIQRLR). An RNB domain is found at 399–694 (RIDLTHLKVY…AHYQIKAFLR (296 aa)).

The protein belongs to the RNR ribonuclease family. Expressed in seedlings, roots, leaves and flowers.

The protein resides in the mitochondrion. Its subcellular location is the plastid. It is found in the chloroplast. It catalyses the reaction Exonucleolytic cleavage in the 3'- to 5'-direction to yield nucleoside 5'-phosphates.. 3'-5' exoribonuclease that catalyzes 3' maturation of chloroplast and mitochondrion ribosomal RNAs; degrades short nucleotidic extensions to generate the mature 3'-ends. Involved in the maturation of 23S, 16S and 5S rRNAs. The polypeptide is Ribonuclease II, chloroplastic/mitochondrial (RNR1) (Arabidopsis thaliana (Mouse-ear cress)).